Here is a 203-residue protein sequence, read N- to C-terminus: FMN-dependent NADH:quinone oxidoreductase 5 (203 aa).

FMN is bound by residues serine 9, 15–17 (SAS), 95–98 (MYNF), and 139–142 (TSGG).

The protein belongs to the azoreductase type 1 family. In terms of assembly, homodimer. FMN serves as cofactor.

It catalyses the reaction 2 a quinone + NADH + H(+) = 2 a 1,4-benzosemiquinone + NAD(+). The enzyme catalyses N,N-dimethyl-1,4-phenylenediamine + anthranilate + 2 NAD(+) = 2-(4-dimethylaminophenyl)diazenylbenzoate + 2 NADH + 2 H(+). Functionally, quinone reductase that provides resistance to thiol-specific stress caused by electrophilic quinones. In terms of biological role, also exhibits azoreductase activity. Catalyzes the reductive cleavage of the azo bond in aromatic azo compounds to the corresponding amines. This Pseudomonas fluorescens (strain ATCC BAA-477 / NRRL B-23932 / Pf-5) protein is FMN-dependent NADH:quinone oxidoreductase 5.